Reading from the N-terminus, the 408-residue chain is Protein trichome birefringence-like 14 (408 aa).

The helical; Signal-anchor for type II membrane protein transmembrane segment at Gly-11–Glu-31 threads the bilayer. Residues Gly-131–Ser-133 carry the GDS motif motif. A DCXHWCLPGXXDXWN motif motif is present at residues Asp-387 to Asn-401.

It belongs to the PC-esterase family. TBL subfamily.

It is found in the membrane. Functionally, may act as a bridging protein that binds pectin and other cell wall polysaccharides. Probably involved in maintaining esterification of pectins. May be involved in the specific O-acetylation of cell wall polymers. In Arabidopsis thaliana (Mouse-ear cress), this protein is Protein trichome birefringence-like 14 (TBL14).